We begin with the raw amino-acid sequence, 392 residues long: Zinc finger protein CONSTANS-LIKE 7 (392 aa).

C22, C25, C46, and H51 together coordinate Zn(2+). The B box-type; atypical zinc finger occupies 22 to 65; that stretch reads CDACMKRSRASWYCPADDAFLCQSCDASIHSANHLAKRHERVRL. A coiled-coil region spans residues 226–254; that stretch reads KEENKVGFEINCKDLKRVKDEDEEEEEAK. 2 disordered regions span residues 246 to 271 and 326 to 346; these read EDEEEEEAKCENGGSKDSDREASNDK and SDGSVTRQQGRDGGGSDGERE. Residues 259-271 show a composition bias toward basic and acidic residues; it reads GSKDSDREASNDK. The CCT domain occupies 345 to 387; sequence REARVLRYKEKRRTRLFSKKIRYEVRKLNAEQRPRIKGRFVKR.

It belongs to the CONSTANS family.

It localises to the nucleus. This chain is Zinc finger protein CONSTANS-LIKE 7 (COL7), found in Arabidopsis thaliana (Mouse-ear cress).